A 474-amino-acid chain; its full sequence is Hepatocyte nuclear factor 4-alpha (474 aa).

The nuclear receptor DNA-binding region spans 57 to 132; that stretch reads SALCAICGDR…AGMKKEAVQN (76 aa). 2 consecutive NR C4-type zinc fingers follow at residues 60–80 and 96–120; these read CAICGDRATGKHYGASSCDGC and CRFSRQCVVDKDKRNQCRYCRLKKC. A phosphoserine mark is found at Ser-142 and Ser-143. Residue Tyr-144 is modified to Phosphotyrosine. The NR LBD domain maps to 147 to 377; it reads SSLPSINALL…NLLQEMLLGG (231 aa). Thr-166 carries the post-translational modification Phosphothreonine. Ser-167 carries the post-translational modification Phosphoserine. Residues Lys-234 and Lys-307 each participate in a glycyl lysine isopeptide (Lys-Gly) (interchain with G-Cter in ubiquitin) cross-link. Position 313 is a phosphoserine; by AMPK (Ser-313). Residues 368 to 376 carry the 9aaTAD motif; the sequence is NLLQEMLLG. Residues 419–447 are disordered; sequence EWPRPRGQAATPETPQPSPPGGSGSEPYK. Thr-429 and Thr-432 each carry phosphothreonine. Ser-436 carries the phosphoserine modification. The residue at position 458 (Lys-458) is an N6-acetyllysine.

The protein belongs to the nuclear hormone receptor family. NR2 subfamily. In terms of assembly, homodimerization is required for HNF4-alpha to bind to its recognition site. Interacts with CLOCK, BMAL1, CRY1, CRY2, PER1 and PER2. Interacts with NR0B2/SHP; the resulting heterodimer is transcriptionally inactive. Interacts with DDX3X; this interaction disrupts the interaction between HNF4 and NR0B2 that forms inactive heterodimers and enhances the formation of active HNF4 homodimers. Post-translationally, phosphorylated on tyrosine residue(s); phosphorylation is important for its DNA-binding activity. Phosphorylation may directly or indirectly play a regulatory role in the subnuclear distribution. Phosphorylation at Ser-313 by AMPK reduces the ability to form homodimers and bind DNA. Acetylation at Lys-458 lowers transcriptional activation by about two-fold.

The protein resides in the nucleus. In terms of biological role, transcriptional regulator which controls the expression of hepatic genes during the transition of endodermal cells to hepatic progenitor cells, facilitating the recruitment of RNA pol II to the promoters of target genes. Activates the transcription of CYP2C38. Represses the CLOCK-BMAL1 transcriptional activity and is essential for circadian rhythm maintenance and period regulation in the liver and colon cells. The protein is Hepatocyte nuclear factor 4-alpha (HNF4A) of Homo sapiens (Human).